We begin with the raw amino-acid sequence, 206 residues long: Urease accessory protein UreG (206 aa).

Position 12-19 (12-19) interacts with GTP; it reads GPVGSGKT.

It belongs to the SIMIBI class G3E GTPase family. UreG subfamily. In terms of assembly, homodimer. UreD, UreF and UreG form a complex that acts as a GTP-hydrolysis-dependent molecular chaperone, activating the urease apoprotein by helping to assemble the nickel containing metallocenter of UreC. The UreE protein probably delivers the nickel.

Its subcellular location is the cytoplasm. Functionally, facilitates the functional incorporation of the urease nickel metallocenter. This process requires GTP hydrolysis, probably effectuated by UreG. The protein is Urease accessory protein UreG of Synechocystis sp. (strain ATCC 27184 / PCC 6803 / Kazusa).